We begin with the raw amino-acid sequence, 516 residues long: Apolipoprotein N-acyltransferase (516 aa).

Helical transmembrane passes span 24 to 44 (LAQA…LLYL), 58 to 78 (GWCY…ISIH), 90 to 110 (LLTL…AWLW), 125 to 145 (LAFA…LTGF), 163 to 183 (APLG…ALLV), and 192 to 212 (PPAL…GLAL). A CN hydrolase domain is found at 230–471 (VQGNVEQNLK…RAVLYGEVTP (242 aa)). Glu-270 functions as the Proton acceptor in the catalytic mechanism. Lys-331 is an active-site residue. The active-site Nucleophile is the Cys-383. A helical membrane pass occupies residues 479–499 (LRWRAWPLAGLAVLLLGWALL).

The protein belongs to the CN hydrolase family. Apolipoprotein N-acyltransferase subfamily.

It localises to the cell inner membrane. The enzyme catalyses N-terminal S-1,2-diacyl-sn-glyceryl-L-cysteinyl-[lipoprotein] + a glycerophospholipid = N-acyl-S-1,2-diacyl-sn-glyceryl-L-cysteinyl-[lipoprotein] + a 2-acyl-sn-glycero-3-phospholipid + H(+). It participates in protein modification; lipoprotein biosynthesis (N-acyl transfer). Functionally, catalyzes the phospholipid dependent N-acylation of the N-terminal cysteine of apolipoprotein, the last step in lipoprotein maturation. The sequence is that of Apolipoprotein N-acyltransferase from Azotobacter vinelandii (strain DJ / ATCC BAA-1303).